Consider the following 231-residue polypeptide: Mediator of RNA polymerase II transcription subunit 18 (231 aa).

A coiled-coil region spans residues 191–218 (HLTDIEALNKAVKELEKVKTELHGLMNL).

The protein belongs to the Mediator complex subunit 18 family. As to quaternary structure, component of the Mediator complex.

The protein resides in the nucleus. In terms of biological role, component of the Mediator complex, a coactivator involved in the regulated transcription of nearly all RNA polymerase II-dependent genes. Mediator functions as a bridge to convey information from gene-specific regulatory proteins to the basal RNA polymerase II transcription machinery. Mediator is recruited to promoters by direct interactions with regulatory proteins and serves as a scaffold for the assembly of a functional preinitiation complex with RNA polymerase II and the general transcription factors. In Yarrowia lipolytica (strain CLIB 122 / E 150) (Yeast), this protein is Mediator of RNA polymerase II transcription subunit 18 (SRB5).